The primary structure comprises 185 residues: Ribosome-recycling factor (185 aa).

Belongs to the RRF family.

The protein resides in the cytoplasm. Responsible for the release of ribosomes from messenger RNA at the termination of protein biosynthesis. May increase the efficiency of translation by recycling ribosomes from one round of translation to another. In Halorhodospira halophila (strain DSM 244 / SL1) (Ectothiorhodospira halophila (strain DSM 244 / SL1)), this protein is Ribosome-recycling factor.